A 137-amino-acid polypeptide reads, in one-letter code: Ribosome-binding factor A (137 aa).

This sequence belongs to the RbfA family. In terms of assembly, monomer. Binds 30S ribosomal subunits, but not 50S ribosomal subunits or 70S ribosomes.

It localises to the cytoplasm. Functionally, one of several proteins that assist in the late maturation steps of the functional core of the 30S ribosomal subunit. Associates with free 30S ribosomal subunits (but not with 30S subunits that are part of 70S ribosomes or polysomes). Required for efficient processing of 16S rRNA. May interact with the 5'-terminal helix region of 16S rRNA. This is Ribosome-binding factor A from Nitrobacter winogradskyi (strain ATCC 25391 / DSM 10237 / CIP 104748 / NCIMB 11846 / Nb-255).